The sequence spans 232 residues: Phosphatidylserine decarboxylase proenzyme (232 aa).

S190 serves as the catalytic Schiff-base intermediate with substrate; via pyruvic acid. S190 carries the pyruvic acid (Ser); by autocatalysis modification.

Belongs to the phosphatidylserine decarboxylase family. PSD-A subfamily. As to quaternary structure, heterodimer of a large membrane-associated beta subunit and a small pyruvoyl-containing alpha subunit. Requires pyruvate as cofactor. Is synthesized initially as an inactive proenzyme. Formation of the active enzyme involves a self-maturation process in which the active site pyruvoyl group is generated from an internal serine residue via an autocatalytic post-translational modification. Two non-identical subunits are generated from the proenzyme in this reaction, and the pyruvate is formed at the N-terminus of the alpha chain, which is derived from the carboxyl end of the proenzyme. The post-translation cleavage follows an unusual pathway, termed non-hydrolytic serinolysis, in which the side chain hydroxyl group of the serine supplies its oxygen atom to form the C-terminus of the beta chain, while the remainder of the serine residue undergoes an oxidative deamination to produce ammonia and the pyruvoyl prosthetic group on the alpha chain.

The protein resides in the cell membrane. It catalyses the reaction a 1,2-diacyl-sn-glycero-3-phospho-L-serine + H(+) = a 1,2-diacyl-sn-glycero-3-phosphoethanolamine + CO2. It participates in phospholipid metabolism; phosphatidylethanolamine biosynthesis; phosphatidylethanolamine from CDP-diacylglycerol: step 2/2. In terms of biological role, catalyzes the formation of phosphatidylethanolamine (PtdEtn) from phosphatidylserine (PtdSer). The polypeptide is Phosphatidylserine decarboxylase proenzyme (Brucella abortus (strain S19)).